The chain runs to 257 residues: Beta-fibrinogenase mucrofibrase-5 (257 aa).

A signal peptide spans 1–18 (MVLIRVLANLLILQLSYA). Residues 19-24 (QKSSEL) constitute a propeptide that is removed on maturation. One can recognise a Peptidase S1 domain in the interval 25-248 (IIGGDECNIN…HLDWIKGIIA (224 aa)). Disulfide bonds link Cys-31–Cys-162, Cys-49–Cys-65, Cys-97–Cys-255, Cys-141–Cys-209, Cys-173–Cys-188, and Cys-199–Cys-224. Residue His-64 is the Charge relay system of the active site. Asn-102 is a glycosylation site (N-linked (GlcNAc...) asparagine). The active-site Charge relay system is Asp-109. Ser-203 acts as the Charge relay system in catalysis.

The protein belongs to the peptidase S1 family. Snake venom subfamily. Monomer. As to expression, expressed by the venom gland.

It is found in the secreted. Its function is as follows. Snake venom serine protease with strong beta-fibrinogenolytic activities, angiotensin I (AGT)-degrading activities and strong kallikrein-like activities in vitro, releasing bradykinin from kininogen (KNG1). Intravenous injection mildly lowers blood pressure in experimental rats, which may be explained by the action on angiotensin I and kininogen. Exhibits amidase activity against N-benzoyl-Pro-Phe-Arg-p-nitroanilide in vitro. This is Beta-fibrinogenase mucrofibrase-5 from Protobothrops mucrosquamatus (Taiwan habu).